A 477-amino-acid chain; its full sequence is Dihydrolipoyl dehydrogenase (477 aa).

Residues 41–50 (EKRGALGGTC), Lys59, Gly124, and 153–155 (TGS) each bind FAD. Residues Cys50 and Cys55 are joined by a disulfide bond. Residues 190 to 197 (GGGVIGLE), Glu213, Val248, and Gly282 each bind NAD(+). Residues Asp323 and 330–333 (MLAH) contribute to the FAD site. His456 (proton acceptor) is an active-site residue.

The protein belongs to the class-I pyridine nucleotide-disulfide oxidoreductase family. Homodimer. Requires FAD as cofactor.

The catalysed reaction is N(6)-[(R)-dihydrolipoyl]-L-lysyl-[protein] + NAD(+) = N(6)-[(R)-lipoyl]-L-lysyl-[protein] + NADH + H(+). The protein is Dihydrolipoyl dehydrogenase (LPD) of Trypanosoma cruzi.